We begin with the raw amino-acid sequence, 371 residues long: 43 kDa relaxation protein (371 aa).

Disordered stretches follow at residues methionine 1–proline 46, lysine 150–threonine 172, arginine 196–glutamine 221, serine 263–glutamate 291, and isoleucine 328–arginine 371. Over residues tyrosine 22–serine 42 the composition is skewed to basic and acidic residues. Residues glutamine 157 to asparagine 168 show a composition bias toward basic residues. The span at arginine 196–leucine 215 shows a compositional bias: basic and acidic residues. Basic and acidic residues predominate over residues glutamine 330–lysine 365.

The protein belongs to the MobA/MobL family.

In terms of biological role, this protein is probably required for relaxation complex formation. This chain is 43 kDa relaxation protein, found in Salmonella typhimurium.